The chain runs to 192 residues: Transcriptional activator GvpE (192 aa).

Position 140–145 (Lys140–Arg145) interacts with DNA. The interval Glu150–Tyr181 is leucine-zipper.

In terms of assembly, interacts with GvpD, also with c-GvpD from H.salinarum.

The protein localises to the cytoplasm. With respect to regulation, the amount of protein that accumulates is controlled by GvpD; GvpD causes a reduction in the amount of GvpE, preventing accumulation of excessive amounts of gas vesicles. Plays a regulatory role in gas vesicle synthesis, activates transcription of the gvpA operon, and probably of the gvpD operon. Gas vesicles are hollow, gas filled proteinaceous nanostructures found in some microorganisms. They allow positioning of halobacteria at the optimal depth for growth in the poorly aerated, shallow brine pools of their habitat. Its function is as follows. Expression of a 9.5 kb mc-vac DNA fragment containing 2 divergently transcribed regions (gvpD-gvpE-gvpF-gvpG-gvpH-gvpI-gvpJ-gvpK-gvpL-gvpM and gvpA-gvpC-gvpN-gvpO) allows H.volcanii to produce gas vesicles. This chain is Transcriptional activator GvpE, found in Haloferax mediterranei (strain ATCC 33500 / DSM 1411 / JCM 8866 / NBRC 14739 / NCIMB 2177 / R-4) (Halobacterium mediterranei).